The chain runs to 1444 residues: Probable serine/threonine-protein kinase irlC (1444 aa).

Residues 335–370 (TLINNNNNNNNNNNNNNNNNNNNNNNNNNNNNNNSK) form a disordered region. Residues 338 to 368 (NNNNNNNNNNNNNNNNNNNNNNNNNNNNNNN) are compositionally biased toward low complexity. The SWIM-type zinc-finger motif lies at 495–529 (FTFYLSFGEIFTCSCEDYKREFSCKHMFFILLNYY). Positions 584-613 (TSPFQSINNNNNNNLNNNNNNNLNNNNNNE) are enriched in low complexity. 2 disordered regions span residues 584–619 (TSPF…NKFK) and 864–938 (QKEK…ITPI). 2 coiled-coil regions span residues 593–620 (NNNN…KFKE) and 847–879 (IKAE…KSKI). Over residues 864–876 (QKEKKKQKQKQSK) the composition is skewed to basic residues. A compositionally biased stretch (low complexity) spans 885–937 (SSSSSSSSSPSTSNTTITSTTPTTTTTTTTTTTPTTTTTTTTTSSPKQKPITP). Residues 981 to 1246 (RKEENVLGRG…IEKILLHPFF (266 aa)) enclose the Protein kinase domain. ATP-binding positions include 987-995 (LGRGSNGTL) and K1010. D1116 (proton acceptor) is an active-site residue. Residues 1279–1444 (NYQEINLKNN…LIYFNDLIIK (166 aa)) enclose the KEN domain.

Belongs to the protein kinase superfamily. Ser/Thr protein kinase family.

It carries out the reaction L-seryl-[protein] + ATP = O-phospho-L-seryl-[protein] + ADP + H(+). The enzyme catalyses L-threonyl-[protein] + ATP = O-phospho-L-threonyl-[protein] + ADP + H(+). In Dictyostelium discoideum (Social amoeba), this protein is Probable serine/threonine-protein kinase irlC (irlC).